Reading from the N-terminus, the 708-residue chain is ATP-dependent RNA helicase laf-1 (708 aa).

Residues 1 to 21 (MESNQSNNGGSGNAALNRGGR) are compositionally biased toward low complexity. The tract at residues 1–191 (MESNQSNNGG…RGTSKWENRG (191 aa)) is disordered. Gly residues predominate over residues 48 to 70 (GAGGGGYRRGGGNSGGGGGGGYD). Composition is skewed to basic and acidic residues over residues 72–83 (GYNDNRDDRDNR) and 90–99 (GRDRNYEDRG). A compositionally biased stretch (gly residues) spans 100–123 (YNGGGGGGGNRGYNNNRGGGGGGY). The Q motif signature appears at 231-259 (SLFSDLSLHEWIEENIKTAGYDRPTPVQK). The Helicase ATP-binding domain maps to 262–453 (IPALQGGRDL…QDFLKENYVF (192 aa)). ATP is bound at residue 275-282 (AQTGSGKT). The DEAD box signature appears at 397–400 (DEAD). Residues 465–626 (NIMQKIVWVE…ELPDWLEGMS (162 aa)) enclose the Helicase C-terminal domain. The interval 623 to 708 (EGMSGDMRSG…RAQPQQDWWS (86 aa)) is disordered. Composition is skewed to gly residues over residues 630-647 (RSGG…GQRF) and 656-692 (GGSG…GGGR). Over residues 699–708 (RAQPQQDWWS) the composition is skewed to polar residues.

It belongs to the DEAD box helicase family. DDX3/DED1 subfamily. In terms of assembly, binds RNA as a monomer at low laf-1 concentrations and as a dimer at high laf-1 concentrations. Expressed in the germline and soma of young adult hermaphrodites.

The protein resides in the cytoplasm. Its subcellular location is the cytoplasmic granule. It is found in the nucleus. The protein localises to the stress granule. It localises to the inflammasome. The protein resides in the cell membrane. Its subcellular location is the cell projection. It is found in the lamellipodium. The enzyme catalyses ATP + H2O = ADP + phosphate + H(+). In terms of biological role, multifunctional ATP-dependent RNA helicase. Plays a role in RNA remodeling, but is not required for RNA unwinding. Binds to RNA in a concentration-dependent manner to stimulate annealing between two complementary strands of RNA. This process is also dependent upon ATP; ATP reduces binding to RNA and subsequently diminishes RNA annealing. Involved in many cellular processes, which do not necessarily require its ATPase/helicase catalytic activities. Involved in the regulation of transcription and translation initiation. Involved in innate immunity. Involved in both stress and inflammatory responses. Promotes liquid-liquid phase separation of P granules, which is a process important for intracellular organization and stress granule assembly. Required for embryonic development. Plays a role in sexual cell fate determination by negatively regulating the translation of the sex determining protein tra-2. May play a protective role in the response to heat and oxidative stress. May negatively regulate extrinsic apoptotic signaling pathway via death domain receptors. May be involved in mitotic chromosome segregation. This Caenorhabditis elegans protein is ATP-dependent RNA helicase laf-1.